A 607-amino-acid chain; its full sequence is NAD-dependent protein deacetylase sir-2.1 (607 aa).

The segment at 1 to 68 (MSRDSGNDSE…SVSSESWQNN (68 aa)) is disordered. A compositionally biased stretch (low complexity) spans 55-64 (ESTTSVSSES). Residues 128–401 (KLTNYNSLAD…DSIMEQQGKT (274 aa)) form the Deacetylase sirtuin-type domain. Residues 153-172 (GAGVSVSCGIPDFRSKDGIY) and 237-240 (QNID) contribute to the NAD(+) site. The active-site Proton acceptor is histidine 255. The Zn(2+) site is built by cysteine 263, cysteine 266, cysteine 287, and cysteine 290. Residues 327-329 (GSS), 352-354 (NRE), and cysteine 369 contribute to the NAD(+) site. Residues 426–453 (EKRNDDSSDEPTLKKPRMSVADDSMDSE) are disordered.

It belongs to the sirtuin family. Class I subfamily. Interacts with ftt-2 and par-5. Interacts with daf-16 following heat-shock, which causes daf-16 to accumulate in the nucleus. Interaction with daf-16 is promoted by ftt-2. Interacts with transcriptional coregulator hcf-1. The cofactor is Zn(2+).

The protein resides in the nucleus. It is found in the cytoplasm. The enzyme catalyses N(6)-acetyl-L-lysyl-[protein] + NAD(+) + H2O = 2''-O-acetyl-ADP-D-ribose + nicotinamide + L-lysyl-[protein]. Functionally, NAD-dependent deacetylase. Involved in metabolism, apoptosis, response to oxidative stress, response to DNA damage, and determination of lifespan. Required for a reduction of the 'Lys-16' acetylation of histone H4 (H4K16ac) on dosage-compensated X chromosomes in hermaphrodites. Plays a role in germ cell and somatic cell apoptosis in response to DNA damage. Functions upstream of daf-16/Forkhead box protein O in the Insulin/IGF-1-like signaling (IIS) mediated pathway, promoting daf-16 mediated transcriptional activation and increased lifespan. May also regulate lifespan independently of daf-16 by modulating the transcription of genes involved in the stress response of the endoplasmic reticulum (ER). Functions upstream of transcriptional coregulator hcf-1, perhaps acting independently of the IIS mediated pathway, to modulate lifespan and oxidative stress response. Acts upstream of the nicotinic acid metabolism pathway, which may be linked to the regulation of longevity. Plays a role in ascaroside-mediated longevity and stress resistance. This Caenorhabditis elegans protein is NAD-dependent protein deacetylase sir-2.1.